The following is a 408-amino-acid chain: uncharacterized protein (408 aa).

The next 12 membrane-spanning stretches (helical) occupy residues 9-29 (WFVLLFTFVFAIGMNSFRNSF), 49-69 (VSVSIFMITTGIVQFFVGFFI), 77-97 (IMALGAVCISASFLVLPYSPN), 100-120 (VFSAIYGVLGGIGYSCAVGVT), 135-155 (LALAILTNANSAGLLLLSPIW), 167-187 (TYTILGIVMAAVLLPLLVFGM), 216-236 (LIHILYFGVFTCGFTMGIIDA), 252-272 (GMMAAFGAFIIIGGLLAGWLS), 283-303 (SILFFIRLLSLICLLIPILGI), 308-328 (LWYFGFILLFGLSYTGVIPLT), 340-360 (LIGSLLGINFFIHQVAGALSV), and 373-393 (YLLIVAVCIVFVGLSAVIELV).

This sequence belongs to the major facilitator superfamily.

It is found in the cell membrane. This is an uncharacterized protein from Bacillus subtilis (strain 168).